The primary structure comprises 358 residues: Transmembrane protein 144 homolog B (358 aa).

10 consecutive transmembrane segments (helical) span residues 6–26 (VIGYIGAAVASLFFGSNYVPV), 35–55 (LAFTWVMSVGTLVVAYCAMFI), 60–79 (IFDPWGLLGGTLWSIGNFCV), 86–108 (IGIGLGLLLWCCSSIITGYFTGK), 122–142 (PALNWIGFACIVAAVIFFFFI), 211–231 (ILGIVLSVFSGIMYGVNMVPM), 244–264 (LSFVFCHFSGIFLANTAVFIV), 279–299 (IFPSFFSGLLWGIANVGLMVA), 307–327 (IGFPMGSGGPMIVSSLWSVFY), and 337–357 (LLILLISFIFLGAGITILALS).

It belongs to the TMEM144 family.

The protein resides in the membrane. The chain is Transmembrane protein 144 homolog B (tmem144B) from Dictyostelium discoideum (Social amoeba).